We begin with the raw amino-acid sequence, 343 residues long: Glutamine synthetase (343 aa).

In terms of domain architecture, GS beta-grasp spans 3–87 (FKAEYIWIDG…CEVLNIDLTP (85 aa)). Residues 92 to 343 (TRAALAEVAE…CSALEKAGQV (252 aa)) form the GS catalytic domain. Mg(2+)-binding residues include Glu-113, Glu-115, Glu-174, and Glu-181. Glu-279 is an L-glutamate binding site.

Belongs to the glutamine synthetase family. As to quaternary structure, homooctamer and homotetramer. It depends on Mg(2+) as a cofactor.

It is found in the cytoplasm. It catalyses the reaction L-glutamate + NH4(+) + ATP = L-glutamine + ADP + phosphate + H(+). Functionally, catalyzes the ATP-dependent biosynthesis of glutamine from glutamate and ammonia. This Streptomyces viridochromogenes protein is Glutamine synthetase.